The primary structure comprises 356 residues: MFS-type transporter tazK (356 aa).

A run of 9 helical transmembrane segments spans residues 12–32 (LPFF…ALGH), 42–62 (FLGG…LADF), 69–89 (GVAV…GAIT), 102–122 (MTAW…FIIL), 178–198 (ILLS…LLFV), 211–231 (GAID…VGAF), 257–277 (LHPM…FAWT), 288–308 (ILAG…SLAY), and 320–340 (AISG…LFAP).

This sequence belongs to the major facilitator superfamily. CAR1 family.

The protein localises to the membrane. Functionally, MFS-type transporter; part of the gene cluster that mediates the biosynthesis of azaterrilone A and other azaphilones, a class of fungal metabolites characterized by a highly oxygenated pyrano-quinone bicyclic core and exhibiting a broad range of bioactivities. This is MFS-type transporter tazK from Aspergillus terreus (strain NIH 2624 / FGSC A1156).